The sequence spans 278 residues: Extracellular metalloprotease MCYG_03238 (278 aa).

Positions 1–19 (MRFSIVLSSIAALSSVAAA) are cleaved as a signal peptide. N52 carries an N-linked (GlcNAc...) asparagine glycan. Zn(2+) is bound at residue H170. The active site involves E171. H174 contributes to the Zn(2+) binding site. A disulfide bridge links C209 with C255.

Belongs to the peptidase M43B family.

It localises to the secreted. Functionally, secreted metalloproteinase that allows assimilation of proteinaceous substrates. Plays a pivotal role as a pathogenicity determinant during infections and contributes to the ability of the pathogen to persist within the mammalian host. The chain is Extracellular metalloprotease MCYG_03238 from Arthroderma otae (strain ATCC MYA-4605 / CBS 113480) (Microsporum canis).